The primary structure comprises 369 residues: S-adenosyl-L-methionine-dependent uroporphyrinogen III methyltransferase, chloroplastic (369 aa).

Residues 1 to 28 (MALVQRIPISSSSIRNWQQARTNLTPIC) constitute a chloroplast transit peptide. Residues Pro-124, 200–202 (GGD), 230–231 (TA), Met-284, and Thr-341 each bind S-adenosyl-L-homocysteine.

It belongs to the precorrin methyltransferase family. Mostly expressed in leaves, and, to a lower extent, in stems, flowers and siliques.

Its subcellular location is the plastid. The protein resides in the chloroplast. The enzyme catalyses uroporphyrinogen III + 2 S-adenosyl-L-methionine = precorrin-2 + 2 S-adenosyl-L-homocysteine + H(+). Its pathway is porphyrin-containing compound metabolism; siroheme biosynthesis; precorrin-2 from uroporphyrinogen III: step 1/1. Functionally, essential protein required for siroheme biosynthesis. Catalyzes the two successive C-2 and C-7 methylation reactions involved in the conversion of uroporphyrinogen III to precorrin-2 via the intermediate formation of precorrin-1. It is a step in the biosynthesis of siroheme. Promotes nitrogen and sulfur assimilation as well as photosynthesis efficiency by triggering chlorophyll, nitrite reductase (NiR) and sulfite reductase (SiR) biosynthesis. The protein is S-adenosyl-L-methionine-dependent uroporphyrinogen III methyltransferase, chloroplastic of Arabidopsis thaliana (Mouse-ear cress).